Here is a 321-residue protein sequence, read N- to C-terminus: MSLKIVYFGTPQFAATVLADLLHHEVNVVAVVTRVDKPQKRSSQLIPSPVKTLALSKNIPLLQPEKVSDPQFVEQLRDFEADVFIVVAYGAILKQMVLDIPKYGCYNLHAGLLPAYRGAAPIQRCIMDGVVQSGNTVIRMDAGMDTGDIANVSFVPVGPDMTAGELAEALASQGGEILIKTLQQISDGTITHTPQEASKASIAPKLSKEEGFILWDHPAEKVYAQIRGVTPAPGAWTLYSYQGKPARRLVIRKASLSSSQGVYGHPGDILLSDQQELLVACAEGAICLKEIQPEGKGVMDSKSFLNGHSGHKLKLSLNLMS.

(6S)-5,6,7,8-tetrahydrofolate is bound at residue 111 to 114; it reads GLLP.

The protein belongs to the Fmt family.

It carries out the reaction L-methionyl-tRNA(fMet) + (6R)-10-formyltetrahydrofolate = N-formyl-L-methionyl-tRNA(fMet) + (6S)-5,6,7,8-tetrahydrofolate + H(+). Functionally, attaches a formyl group to the free amino group of methionyl-tRNA(fMet). The formyl group appears to play a dual role in the initiator identity of N-formylmethionyl-tRNA by promoting its recognition by IF2 and preventing the misappropriation of this tRNA by the elongation apparatus. The polypeptide is Methionyl-tRNA formyltransferase (Chlamydia abortus (strain DSM 27085 / S26/3) (Chlamydophila abortus)).